A 597-amino-acid chain; its full sequence is K(+) efflux antiporter 6 (597 aa).

Residues 1–35 (MVEGRRRRRFSLSSQQLALLLLLLSFFLCFSVASP) form the signal peptide. 12 helical membrane passes run 177–197 (LISD…AFAC), 201–221 (PVIT…LNFI), 224–244 (MVQV…ALGL), 257–277 (VAVL…GITV), 287–307 (GVFV…KFLM), 321–341 (IGIL…LPVL), 351–371 (MLSI…LSIL), 396–416 (LAAV…GLSL), 440–460 (IEPI…MLVN), 461–481 (VHFL…VIII), 499–519 (TALL…VLLS), and 543–563 (LVTT…GILL).

It belongs to the monovalent cation:proton antiporter 2 (CPA2) transporter (TC 2.A.37) family. KEA (TC 2.A.37.1) subfamily. In terms of tissue distribution, expressed in roots, stems, leaves, flowers and silique.

The protein resides in the golgi apparatus membrane. The protein localises to the golgi apparatus. It localises to the trans-Golgi network membrane. Its subcellular location is the prevacuolar compartment membrane. It is found in the endomembrane system. The catalysed reaction is K(+)(in) + H(+)(out) = K(+)(out) + H(+)(in). Functionally, electroneutral K(+)/H(+) efflux antiporter involved in K(+) homeostasis and osmotic adjustment. Together with KEA4 and KEA5, promotes growth and development, and facilitates endosomal pH and ions homeostasis, as well as salt tolerance (e.g. K(+), NaCl and LiCl), probably by supporting cell wall biosynthesis during rapid etiolated seedling growth. This chain is K(+) efflux antiporter 6, found in Arabidopsis thaliana (Mouse-ear cress).